Consider the following 136-residue polypeptide: Large ribosomal subunit protein bL17 (136 aa).

This sequence belongs to the bacterial ribosomal protein bL17 family. Part of the 50S ribosomal subunit. Contacts protein L32.

The polypeptide is Large ribosomal subunit protein bL17 (Akkermansia muciniphila (strain ATCC BAA-835 / DSM 22959 / JCM 33894 / BCRC 81048 / CCUG 64013 / CIP 107961 / Muc)).